Reading from the N-terminus, the 361-residue chain is Phospho-N-acetylmuramoyl-pentapeptide-transferase (361 aa).

A run of 10 helical transmembrane segments spans residues 28 to 48 (LAAL…IRSL), 73 to 93 (TMGG…WADL), 97 to 117 (YIWV…VDDY), 134 to 154 (FFWQ…TADL), 168 to 188 (VAIP…IVGT), 200 to 220 (GLAI…AYVA), 237 to 257 (AGEL…FLWF), 264 to 284 (VFMG…ITVI), 289 to 309 (IVLV…MIQV), and 338 to 358 (QVVV…LSTL).

The protein belongs to the glycosyltransferase 4 family. MraY subfamily. The cofactor is Mg(2+).

The protein localises to the cell inner membrane. It catalyses the reaction UDP-N-acetyl-alpha-D-muramoyl-L-alanyl-gamma-D-glutamyl-meso-2,6-diaminopimeloyl-D-alanyl-D-alanine + di-trans,octa-cis-undecaprenyl phosphate = di-trans,octa-cis-undecaprenyl diphospho-N-acetyl-alpha-D-muramoyl-L-alanyl-D-glutamyl-meso-2,6-diaminopimeloyl-D-alanyl-D-alanine + UMP. Its pathway is cell wall biogenesis; peptidoglycan biosynthesis. In terms of biological role, catalyzes the initial step of the lipid cycle reactions in the biosynthesis of the cell wall peptidoglycan: transfers peptidoglycan precursor phospho-MurNAc-pentapeptide from UDP-MurNAc-pentapeptide onto the lipid carrier undecaprenyl phosphate, yielding undecaprenyl-pyrophosphoryl-MurNAc-pentapeptide, known as lipid I. The protein is Phospho-N-acetylmuramoyl-pentapeptide-transferase of Nitrosomonas europaea (strain ATCC 19718 / CIP 103999 / KCTC 2705 / NBRC 14298).